The chain runs to 466 residues: Phosphomethylpyrimidine synthase (466 aa).

Substrate contacts are provided by residues asparagine 80, methionine 109, tyrosine 139, histidine 175, serine 195 to glycine 197, aspartate 236 to arginine 239, and glutamate 275. Histidine 279 contacts Zn(2+). Residue tyrosine 302 participates in substrate binding. Residue histidine 343 coordinates Zn(2+). The [4Fe-4S] cluster site is built by cysteine 423, cysteine 426, and cysteine 431.

It belongs to the ThiC family. The cofactor is [4Fe-4S] cluster.

It catalyses the reaction 5-amino-1-(5-phospho-beta-D-ribosyl)imidazole + S-adenosyl-L-methionine = 4-amino-2-methyl-5-(phosphooxymethyl)pyrimidine + CO + 5'-deoxyadenosine + formate + L-methionine + 3 H(+). It functions in the pathway cofactor biosynthesis; thiamine diphosphate biosynthesis. Catalyzes the synthesis of the hydroxymethylpyrimidine phosphate (HMP-P) moiety of thiamine from aminoimidazole ribotide (AIR) in a radical S-adenosyl-L-methionine (SAM)-dependent reaction. The protein is Phosphomethylpyrimidine synthase of Prochlorococcus marinus (strain NATL2A).